Here is a 396-residue protein sequence, read N- to C-terminus: Probable sugar efflux transporter (396 aa).

Transmembrane regions (helical) follow at residues 15 to 35 (VVTL…PVGL), 50 to 70 (VGIM…PFML), 81 to 101 (LICL…SWSF), 103 to 123 (VLVI…SITA), 136 to 156 (AQAL…GLPL), 170 to 190 (FFAI…LLPL), 209 to 229 (PALM…YTAY), 246 to 266 (FATA…VIFG), 275 to 295 (ALVS…LPAA), 299 to 319 (IHLG…GLGM), 333 to 353 (VAMA…ALVG), and 364 to 384 (MIGY…IIIF).

Belongs to the major facilitator superfamily. SotB (TC 2.A.1.2) family.

Its subcellular location is the cell inner membrane. Its function is as follows. Involved in the efflux of sugars. The physiological role may be the reduction of the intracellular concentration of toxic sugars or sugar metabolites. This chain is Probable sugar efflux transporter, found in Escherichia coli O139:H28 (strain E24377A / ETEC).